A 362-amino-acid chain; its full sequence is Type II methyltransferase M.MamI (362 aa).

It belongs to the N(4)/N(6)-methyltransferase family.

The enzyme catalyses a 2'-deoxyadenosine in DNA + S-adenosyl-L-methionine = an N(6)-methyl-2'-deoxyadenosine in DNA + S-adenosyl-L-homocysteine + H(+). Its function is as follows. A gamma subtype methylase that recognizes the double-stranded sequence 5'-GATNNNNATC-3', methylates A-? on both strands, and protects the DNA from cleavage by the MamI endonuclease. This is Type II methyltransferase M.MamI from Microbacterium ammoniaphilum.